The primary structure comprises 172 residues: 3-hydroxydecanoyl-[acyl-carrier-protein] dehydratase (172 aa).

The active site involves His-71.

Belongs to the thioester dehydratase family. FabA subfamily. As to quaternary structure, homodimer.

It is found in the cytoplasm. It carries out the reaction a (3R)-hydroxyacyl-[ACP] = a (2E)-enoyl-[ACP] + H2O. It catalyses the reaction (3R)-hydroxydecanoyl-[ACP] = (2E)-decenoyl-[ACP] + H2O. The catalysed reaction is (2E)-decenoyl-[ACP] = (3Z)-decenoyl-[ACP]. The protein operates within lipid metabolism; fatty acid biosynthesis. Functionally, necessary for the introduction of cis unsaturation into fatty acids. Catalyzes the dehydration of (3R)-3-hydroxydecanoyl-ACP to E-(2)-decenoyl-ACP and then its isomerization to Z-(3)-decenoyl-ACP. Can catalyze the dehydratase reaction for beta-hydroxyacyl-ACPs with saturated chain lengths up to 16:0, being most active on intermediate chain length. This chain is 3-hydroxydecanoyl-[acyl-carrier-protein] dehydratase, found in Pectobacterium carotovorum subsp. carotovorum (strain PC1).